The primary structure comprises 194 residues: Adenylate kinase (194 aa).

Position 12–17 (Gly-12–Thr-17) interacts with ATP. The tract at residues Ser-34–Val-63 is NMP. Residues Thr-35, Arg-40, Gln-61–Val-63, Gly-88–Arg-91, and Gln-95 contribute to the AMP site. Residues Gly-130 to Asp-136 form an LID region. Arg-131 is an ATP binding site. AMP is bound by residues Arg-133 and Arg-145. Arg-173 is an ATP binding site.

It belongs to the adenylate kinase family. As to quaternary structure, monomer.

The protein resides in the cytoplasm. The enzyme catalyses AMP + ATP = 2 ADP. It functions in the pathway purine metabolism; AMP biosynthesis via salvage pathway; AMP from ADP: step 1/1. Its function is as follows. Catalyzes the reversible transfer of the terminal phosphate group between ATP and AMP. Plays an important role in cellular energy homeostasis and in adenine nucleotide metabolism. This chain is Adenylate kinase, found in Nitratiruptor sp. (strain SB155-2).